A 400-amino-acid chain; its full sequence is Probable peptidoglycan glycosyltransferase FtsW (400 aa).

11 helical membrane passes run 30 to 50 (LSVL…SIGI), 65 to 84 (QAAY…RIRL), 92 to 112 (GLLL…GVGV), 123 to 143 (LGLF…LYLA), 157 to 177 (FAGF…LLME), 179 to 199 (DFGA…LAGA), 201 to 221 (LWQF…LAIT), 247 to 267 (TQSL…GASV), 280 to 300 (FLFA…VVLL), 321 to 341 (LFGA…AFIN), and 356 to 376 (LPLM…VGLL).

Belongs to the SEDS family. FtsW subfamily.

It localises to the cell inner membrane. The enzyme catalyses [GlcNAc-(1-&gt;4)-Mur2Ac(oyl-L-Ala-gamma-D-Glu-L-Lys-D-Ala-D-Ala)](n)-di-trans,octa-cis-undecaprenyl diphosphate + beta-D-GlcNAc-(1-&gt;4)-Mur2Ac(oyl-L-Ala-gamma-D-Glu-L-Lys-D-Ala-D-Ala)-di-trans,octa-cis-undecaprenyl diphosphate = [GlcNAc-(1-&gt;4)-Mur2Ac(oyl-L-Ala-gamma-D-Glu-L-Lys-D-Ala-D-Ala)](n+1)-di-trans,octa-cis-undecaprenyl diphosphate + di-trans,octa-cis-undecaprenyl diphosphate + H(+). Its pathway is cell wall biogenesis; peptidoglycan biosynthesis. Its function is as follows. Peptidoglycan polymerase that is essential for cell division. This Thioalkalivibrio sulfidiphilus (strain HL-EbGR7) protein is Probable peptidoglycan glycosyltransferase FtsW.